The following is a 319-amino-acid chain: Protein SODIUM POTASSIUM ROOT DEFECTIVE 1 (319 aa).

The segment covering 1 to 13 (MLCASQASTTTLC) has biased composition (polar residues). Disordered stretches follow at residues 1-113 (MLCA…TPQG) and 191-248 (SPDN…NSSS). A compositionally biased stretch (low complexity) spans 14 to 27 (STMDQTSQPSSSSS). Over residues 36–49 (AIDRHNPIIRDGRR) the composition is skewed to basic and acidic residues. The span at 58–67 (LNPSSSSSST) shows a compositional bias: low complexity. Composition is skewed to polar residues over residues 104-113 (SCFSSDTPQG) and 200-210 (TKASPTASLSS). Pro residues predominate over residues 224 to 242 (SPPPPPPPSPPQSSPPSPP). One can recognise an HMA domain in the interval 249-315 (DQVVVLRVSL…KVKNAQFWPE (67 aa)). Positions 260 and 263 each coordinate Zn(2+).

As to quaternary structure, interacts with FT, but not with TSF (TWIN SISTER OF FT). In terms of tissue distribution, expressed in vascular tissues of cotyledons, rosette leaves and roots in developing seedlings before and during the floral transition. Expressed specifically in the phloem companion cells. Not detected in embryos or seeds. Not detected in the vegetative shoot apex.

The protein resides in the cytoplasm. It localises to the nucleus. It is found in the endoplasmic reticulum. Its function is as follows. Required for root meristem maintenance after germination. Involved in phloem translocation, starch accumulation and flowering. Promotes flowering in the photoperiod pathway. Regulates long-distance movement of FT from leaves to the shoot apex through the phloem stream. In Arabidopsis thaliana (Mouse-ear cress), this protein is Protein SODIUM POTASSIUM ROOT DEFECTIVE 1.